The sequence spans 259 residues: Indole-diterpene biosynthesis cluster protein S (259 aa).

Helical transmembrane passes span 5 to 25, 64 to 84, 87 to 107, 134 to 154, and 221 to 241; these read EASG…GMVW, WFAL…AIIL, VYLI…LWVL, VLWF…AASF, and LGAG…PAAG.

Belongs to the ltmS family.

It is found in the membrane. Its function is as follows. Part of the gene cluster that mediates the biosynthesis of paspalitrems, indole-diterpene (IDT) mycotoxins that are potent tremorgens in mammals. The geranylgeranyl diphosphate (GGPP) synthase idtG is proposed to catalyze the first step in IDT biosynthesis via catalysis of a series of iterative condensations of isopentenyl diphosphate (IPP) with dimethylallyl diphosphate (DMAPP), geranyl diphosphate (GPP), and farnesyl diphosphate (FPP), to form GGPP. Condensation of indole-3-glycerol phosphate with GGPP by the prenyltransferase idtC then forms 3-geranylgeranylindole (3-GGI). Epoxidation of the two terminal alkenes of the geranylgeranyl moiety by the FAD-dependent monooxygenase idtM, and cyclization by the terpene cyclase idtB then leads to the production of paspaline. The cytochrome P450 monooxygenase idtP then catalyzes oxidative elimination of the pendant methyl group at C-12 of paspaline and generates the C-10 ketone to yield 13-desoxypaxilline. The cytochrome P450 monooxygenase idtQ may catalyze the C-13 oxidation of 13-desoxypaxilline to afford paxilline. Considering that both paspalicine and paxilline were detected in C.paspali, idtQ also catalyzes the formation of paspalinine from 13-desoxypaxilline via paspalicine as an intermediate. Finally, the alpha-prenyltransferase idtF prenylates paspalinine at the C-20 or the C-21 positions to yield paspalitrems A and C, respectively. The hydroxylation of paspalitrem A at C-32 by a still unknown oxidase affords paspalitrem B. The chain is Indole-diterpene biosynthesis cluster protein S from Claviceps paspali (Rye ergot fungus).